The sequence spans 119 residues: uncharacterized protein (119 aa).

The interval 55–119 (LSTEPPTPPS…SRLPPRSWTN (65 aa)) is disordered. Polar residues predominate over residues 81-92 (LSYTRCHSTTYT).

This is an uncharacterized protein from Saccharomyces cerevisiae (strain ATCC 204508 / S288c) (Baker's yeast).